We begin with the raw amino-acid sequence, 425 residues long: Kynureninase (425 aa).

Residues Leu-105, Thr-106, 133–136 (FPSD), Asp-218, His-221, and Tyr-243 each bind pyridoxal 5'-phosphate. Position 244 is an N6-(pyridoxal phosphate)lysine (Lys-244). Trp-274 and Asn-302 together coordinate pyridoxal 5'-phosphate.

Belongs to the kynureninase family. Homodimer. The cofactor is pyridoxal 5'-phosphate.

It catalyses the reaction L-kynurenine + H2O = anthranilate + L-alanine + H(+). The enzyme catalyses 3-hydroxy-L-kynurenine + H2O = 3-hydroxyanthranilate + L-alanine + H(+). The protein operates within amino-acid degradation; L-kynurenine degradation; L-alanine and anthranilate from L-kynurenine: step 1/1. It participates in cofactor biosynthesis; NAD(+) biosynthesis; quinolinate from L-kynurenine: step 2/3. In terms of biological role, catalyzes the cleavage of L-kynurenine (L-Kyn) and L-3-hydroxykynurenine (L-3OHKyn) into anthranilic acid (AA) and 3-hydroxyanthranilic acid (3-OHAA), respectively. This Flavobacterium psychrophilum (strain ATCC 49511 / DSM 21280 / CIP 103535 / JIP02/86) protein is Kynureninase.